Consider the following 454-residue polypeptide: tRNA modification GTPase MnmE (454 aa).

(6S)-5-formyl-5,6,7,8-tetrahydrofolate is bound by residues Arg26, Glu84, and Lys123. The TrmE-type G domain maps to 219-378 (GLQVVIAGKP…LVDAITAHAG (160 aa)). Residue Asn229 participates in K(+) binding. Residues 229 to 234 (NAGKSS), 248 to 254 (TDIAGTT), and 273 to 276 (DTAG) each bind GTP. A Mg(2+)-binding site is contributed by Ser233. K(+)-binding residues include Thr248, Ile250, and Thr253. Thr254 lines the Mg(2+) pocket. Lys454 is a binding site for (6S)-5-formyl-5,6,7,8-tetrahydrofolate.

Belongs to the TRAFAC class TrmE-Era-EngA-EngB-Septin-like GTPase superfamily. TrmE GTPase family. As to quaternary structure, homodimer. Heterotetramer of two MnmE and two MnmG subunits. Requires K(+) as cofactor.

Its subcellular location is the cytoplasm. Exhibits a very high intrinsic GTPase hydrolysis rate. Involved in the addition of a carboxymethylaminomethyl (cmnm) group at the wobble position (U34) of certain tRNAs, forming tRNA-cmnm(5)s(2)U34. The polypeptide is tRNA modification GTPase MnmE (Acinetobacter baumannii (strain ATCC 17978 / DSM 105126 / CIP 53.77 / LMG 1025 / NCDC KC755 / 5377)).